The following is a 244-amino-acid chain: Probable septum site-determining protein MinC (244 aa).

Belongs to the MinC family. In terms of assembly, interacts with MinD and FtsZ.

Its function is as follows. Cell division inhibitor that blocks the formation of polar Z ring septums. Rapidly oscillates between the poles of the cell to destabilize FtsZ filaments that have formed before they mature into polar Z rings. Prevents FtsZ polymerization. The chain is Probable septum site-determining protein MinC from Dichelobacter nodosus (strain VCS1703A).